Reading from the N-terminus, the 633-residue chain is DNA mismatch repair protein MutL (633 aa).

This sequence belongs to the DNA mismatch repair MutL/HexB family.

This protein is involved in the repair of mismatches in DNA. It is required for dam-dependent methyl-directed DNA mismatch repair. May act as a 'molecular matchmaker', a protein that promotes the formation of a stable complex between two or more DNA-binding proteins in an ATP-dependent manner without itself being part of a final effector complex. In Bacillus pumilus (strain SAFR-032), this protein is DNA mismatch repair protein MutL.